Reading from the N-terminus, the 381-residue chain is Cobalt-precorrin-5B C(1)-methyltransferase (381 aa).

It belongs to the CbiD family.

The catalysed reaction is Co-precorrin-5B + S-adenosyl-L-methionine = Co-precorrin-6A + S-adenosyl-L-homocysteine. The protein operates within cofactor biosynthesis; adenosylcobalamin biosynthesis; cob(II)yrinate a,c-diamide from sirohydrochlorin (anaerobic route): step 6/10. In terms of biological role, catalyzes the methylation of C-1 in cobalt-precorrin-5B to form cobalt-precorrin-6A. This is Cobalt-precorrin-5B C(1)-methyltransferase from Prochlorococcus marinus (strain NATL2A).